A 533-amino-acid polypeptide reads, in one-letter code: GMP synthase [glutamine-hydrolyzing] (533 aa).

The Glutamine amidotransferase type-1 domain occupies 22–215 (RILILDFGSQ…THNVAGCSGT (194 aa)). The active-site Nucleophile is the C99. Catalysis depends on residues H189 and E191. The GMPS ATP-PPase domain maps to 216–408 (WTMAGFRELE…LGIPESIVGR (193 aa)). Residue 243 to 249 (SGGVDSS) participates in ATP binding.

In terms of assembly, homodimer.

It carries out the reaction XMP + L-glutamine + ATP + H2O = GMP + L-glutamate + AMP + diphosphate + 2 H(+). The protein operates within purine metabolism; GMP biosynthesis; GMP from XMP (L-Gln route): step 1/1. In terms of biological role, catalyzes the synthesis of GMP from XMP. This chain is GMP synthase [glutamine-hydrolyzing], found in Gluconobacter oxydans (strain 621H) (Gluconobacter suboxydans).